The sequence spans 215 residues: Cytochrome b6 (215 aa).

A helical membrane pass occupies residues 32–52; it reads IFYCLGGITLTCFLVQVATGF. C35 is a heme c binding site. Heme b-binding residues include H86 and H100. 3 helical membrane passes run 90-110, 116-136, and 186-206; these read ASMMVLMMILHVFRVYLTGGF, LTWVTGVVLAVLTASFGVTGY, and LHTFVLPLLTAVFMLMHFPMI. Positions 187 and 202 each coordinate heme b.

The protein belongs to the cytochrome b family. PetB subfamily. As to quaternary structure, the 4 large subunits of the cytochrome b6-f complex are cytochrome b6, subunit IV (17 kDa polypeptide, PetD), cytochrome f and the Rieske protein, while the 4 small subunits are PetG, PetL, PetM and PetN. The complex functions as a dimer. The cofactor is heme b. Heme c serves as cofactor.

It is found in the plastid. Its subcellular location is the chloroplast thylakoid membrane. Functionally, component of the cytochrome b6-f complex, which mediates electron transfer between photosystem II (PSII) and photosystem I (PSI), cyclic electron flow around PSI, and state transitions. This is Cytochrome b6 from Agrostis stolonifera (Creeping bentgrass).